Consider the following 450-residue polypeptide: MGACLGACSLLSCASCLCGSAPCILCGCCPSTRNSTVSRLLFTSFLFLGVLVSIIMLSPGVESQLYKLPWVCEDRTQQPLVLQGPLDCGSLLGFRAVYRMCFATAAFFFFFMLLMICVRSSRDPRAAIQNGFWFFKFLILVGITVGAFYIPDGSFPKIWFYFGVVGSFLFILIQLILFVDFAHSWNQRWLCKAEECDSPAWYAGLFFFTFLFYLLSIAAVALMFVYYTESGACHEGKVFISLNLTFCVCVSIIAVLPKVQDAQPNSGLLQASVITLYTMFVTWSALSNVPDQKCNPHLPTKNGTGQVDLEDYSTVWWDAPSIVGLVIFILCTFFISLRSSDHRQVNSLMQTEECPAEMVQQQQVAVSDGRAYDNEQDGVTYSYSFFHFCLVLASLHVMMTLTNWYSPGETRKMISTWTSVWVKICASWAGLFLYLWTLVAPLLLPNRDFS.

11 helical membrane-spanning segments follow: residues 5–27 (LGAC…ILCG), 40–57 (LLFT…IIML), 96–118 (AVYR…MICV), 131–150 (GFWF…AFYI), 160–182 (FYFG…VDFA), 203–225 (AGLF…LMFV), 238–257 (VFIS…AVLP), 264–286 (PNSG…WSAL), 315–337 (VWWD…FISL), 380–402 (TYSY…MTLT), and 417–439 (WTSV…WTLV).

The protein belongs to the TDE1 family.

The protein resides in the cell membrane. The enzyme catalyses a 1,2-diacyl-sn-glycero-3-phospho-L-serine(in) = a 1,2-diacyl-sn-glycero-3-phospho-L-serine(out). It carries out the reaction a 1,2-diacyl-sn-glycero-3-phosphocholine(in) = a 1,2-diacyl-sn-glycero-3-phosphocholine(out). The catalysed reaction is a 1,2-diacyl-sn-glycero-3-phosphoethanolamine(in) = a 1,2-diacyl-sn-glycero-3-phosphoethanolamine(out). Non-ATP-dependent, non-specific lipid transporter for phosphatidylserine, phosphatidylcholine, and phosphatidylethanolamine. Functions as a scramblase that flips lipids in both directions across the membrane. In contrast to SERINC3 and SERINC5, has no effect on gammaretrovirus particles infectivity. This is Serine incorporator 2 (Serinc2) from Mus musculus (Mouse).